Consider the following 206-residue polypeptide: Large ribosomal subunit protein uL4 (206 aa).

The interval 44–78 is disordered; it reads RSGNRAQKDREQVKHTTKKPWRQKGTGRARAGMSS. A compositionally biased stretch (basic residues) spans 58–70; the sequence is HTTKKPWRQKGTG.

This sequence belongs to the universal ribosomal protein uL4 family. In terms of assembly, part of the 50S ribosomal subunit.

Functionally, one of the primary rRNA binding proteins, this protein initially binds near the 5'-end of the 23S rRNA. It is important during the early stages of 50S assembly. It makes multiple contacts with different domains of the 23S rRNA in the assembled 50S subunit and ribosome. Its function is as follows. Forms part of the polypeptide exit tunnel. This Paraburkholderia phytofirmans (strain DSM 17436 / LMG 22146 / PsJN) (Burkholderia phytofirmans) protein is Large ribosomal subunit protein uL4.